The chain runs to 165 residues: Neurotrophin-3 (165 aa).

An N-terminal signal peptide occupies residues 1 to 3; that stretch reads IQS. Positions 4-119 are excised as a propeptide; the sequence is TSMDQGSLSE…VLNQTSRRKR (116 aa). N-linked (GlcNAc...) asparagine glycosylation is present at Asn112.

This sequence belongs to the NGF-beta family.

Its subcellular location is the secreted. Seems to promote the survival of visceral and proprioceptive sensory neurons. The polypeptide is Neurotrophin-3 (NTF3) (Aspidites melanocephalus (Black-headed python)).